A 137-amino-acid polypeptide reads, in one-letter code: Ribonuclease P protein component (137 aa).

It belongs to the RnpA family. Consists of a catalytic RNA component (M1 or rnpB) and a protein subunit.

The catalysed reaction is Endonucleolytic cleavage of RNA, removing 5'-extranucleotides from tRNA precursor.. Functionally, RNaseP catalyzes the removal of the 5'-leader sequence from pre-tRNA to produce the mature 5'-terminus. It can also cleave other RNA substrates such as 4.5S RNA. The protein component plays an auxiliary but essential role in vivo by binding to the 5'-leader sequence and broadening the substrate specificity of the ribozyme. The sequence is that of Ribonuclease P protein component from Porphyromonas gingivalis (strain ATCC BAA-308 / W83).